Reading from the N-terminus, the 413-residue chain is Ferredoxin--NADP reductase (413 aa).

M1 carries the N-acetylmethionine modification. Residues 18-76 enclose the CpcD-like domain; sequence NRLFVYEVIGLSQSTMTDGLDYPIRRSGSTFITVPLKRMNQEMRRITRMGGKIVSIKPL. Residues 74-120 are disordered; that stretch reads KPLEGDSPLPHTEGIAKPSQSEGSGSEAVANPAPESNKTMTTTPKEK. Positions 107-116 are enriched in polar residues; the sequence is PESNKTMTTT. The FAD-binding FR-type domain maps to 133–256; it reads KTPYIGKVLE…TGPVGKEMLL (124 aa). FAD is bound by residues 192–195, 213–215, Y219, 230–232, and T271; these read RLYS, CVR, and VCS. Positions 195 and 215 each coordinate NADP(+). NADP(+) contacts are provided by residues T271, 303–304, 333–334, 343–347, 372–373, and E411; these read IP, SR, RMYIQ, and GL.

This sequence belongs to the ferredoxin--NADP reductase type 1 family. As to quaternary structure, purifies with both the classic phycobilisome (PBS) supercomplex (CpcG-PBS) and a photosystem I-associated PBS called CpcL-PBS; it accumulates to a higher level in CpcL-PBS. In both PBS it can be cross-linked to both phycocyanin subunits. FAD is required as a cofactor. Post-translationally, acetylated at the N-terminus; 6% of protein in CpcG-PBS and 12% of protein in CpcL-PBS is acetylated.

The protein resides in the cellular thylakoid membrane. The enzyme catalyses 2 reduced [2Fe-2S]-[ferredoxin] + NADP(+) + H(+) = 2 oxidized [2Fe-2S]-[ferredoxin] + NADPH. The chain is Ferredoxin--NADP reductase from Synechocystis sp. (strain ATCC 27184 / PCC 6803 / Kazusa).